A 417-amino-acid chain; its full sequence is MLARYLNLIGRRSASPYRPQRLPAKFDNVIVAMSSGVDSSVAAALFAGEFPNTRGVYMQNWSESQSLDDPGKEPCYERDWRDVNRVAKHLNIRVDKVNFEQDYWIDVFEPMLRGYSEGSTPNPDIGCNKFVKFGKLREWLDEKYGTGNYWLVTGHYARVMQEMNGKGLFHLLRSIYRPKDQSYYLSQINSTVLSSLLLPIGHLTKPEVRDLAKYAGLPTAEKPDSQGICFVNNSQHGKFKNFLKHYLPSSPGDIITVDPQSGAKTTWGRHDGLWSYTIGQKVGISMPQADPNYQGTWFVSEKLRDTNEILIVRGRDNPALYSDTMRIENFSSLGPREDTINAFQNTGALTLQFRSLQVPVQIKSCKLNRSADNLDITIHLASKQRAITPGQSCCLYIDDRVLGSGPISHVNNNDTHA.

ATP contacts are provided by residues Ala-32–Ser-39 and Met-58. The interval Asn-122–Asp-124 is interaction with target base in tRNA. Cys-127 (nucleophile) is an active-site residue. The cysteines at positions 127 and 229 are disulfide-linked. Gly-154 is a binding site for ATP. Residues Lys-179 to Gln-181 are interaction with tRNA. Cys-229 serves as the catalytic Cysteine persulfide intermediate. The segment at Arg-354 to Ser-355 is interaction with tRNA.

Belongs to the MnmA/TRMU family.

The protein localises to the mitochondrion. The enzyme catalyses 5-taurinomethyluridine(34) in tRNA + S-sulfanyl-L-cysteinyl-[protein] + AH2 + ATP = 5-taurinomethyl-2-thiouridine(34) in tRNA + L-cysteinyl-[protein] + A + AMP + diphosphate + H(+). In terms of biological role, catalyzes the 2-thiolation of uridine at the wobble position (U34) of mitochondrial tRNA(Lys), tRNA(Glu) and tRNA(Gln). Required for the formation of 5-taurinomethyl-2-thiouridine (tm5s2U) of mitochondrial tRNA(Lys), tRNA(Glu), and tRNA(Gln) at the wobble position. ATP is required to activate the C2 atom of the wobble base. In Saccharomyces cerevisiae (strain ATCC 204508 / S288c) (Baker's yeast), this protein is Mitochondrial tRNA-specific 2-thiouridylase 1 (SLM3).